Reading from the N-terminus, the 277-residue chain is General transcription factor IIF subunit 2 (277 aa).

The protein belongs to the TFIIF beta subunit family. Heterodimer of an alpha and a beta subunit.

The protein resides in the nucleus. In terms of biological role, TFIIF is a general transcription initiation factor that binds to RNA polymerase II and helps to recruit it to the initiation complex in collaboration with TFIIB. The sequence is that of General transcription factor IIF subunit 2 (TfIIFbeta) from Drosophila melanogaster (Fruit fly).